The following is a 324-amino-acid chain: Glyoxylate/hydroxypyruvate reductase B (324 aa).

Active-site residues include R237 and E266. H285 functions as the Proton donor in the catalytic mechanism.

This sequence belongs to the D-isomer specific 2-hydroxyacid dehydrogenase family. GhrB subfamily. Homodimer.

The protein localises to the cytoplasm. The catalysed reaction is glycolate + NADP(+) = glyoxylate + NADPH + H(+). The enzyme catalyses (R)-glycerate + NAD(+) = 3-hydroxypyruvate + NADH + H(+). It catalyses the reaction (R)-glycerate + NADP(+) = 3-hydroxypyruvate + NADPH + H(+). Its function is as follows. Catalyzes the NADPH-dependent reduction of glyoxylate and hydroxypyruvate into glycolate and glycerate, respectively. This Shigella flexneri protein is Glyoxylate/hydroxypyruvate reductase B.